Reading from the N-terminus, the 838-residue chain is Transforming acidic coiled-coil-containing protein 3 (838 aa).

S2 bears the N-acetylserine mark. S25, S39, and S71 each carry phosphoserine. Residues 123–227 form a disordered region; it reads EADTDLLGDA…HGAEEECKAE (105 aa). Low complexity predominate over residues 132–164; it reads ASPAFGSGSSSESGPGALADLDCSSSSQSPGSS. Residues S175 and S177 each carry the phosphoserine modification. Residues 204 to 227 are compositionally biased toward basic and acidic residues; sequence DPCRTESQHKAETPHGAEEECKAE. Phosphoserine occurs at positions 250, 317, and 402. The tract at residues 311 to 527 is disordered; it reads GRAMTLSPQE…LELKEESFRD (217 aa). Basic and acidic residues predominate over residues 403 to 412; it reads YHLDWDKMDD. A Phosphoserine modification is found at S434. The segment covering 492-503 has biased composition (polar residues); that stretch reads NSASTSLPTSCP. The interval 522–577 is necessary but not sufficient for spindle localization; the sequence is EESFRDPAEVLGTGAEVDYLEQFGTSSFKESALRKQSLYLKFDPLLRDSPGRPVPV. S558 is modified (phosphoserine; by AURKA). Residues 569–594 are disordered; sequence DSPGRPVPVATETSSMHGANETPSGR. A compositionally biased stretch (polar residues) spans 579-591; sequence TETSSMHGANETP. The segment at 594 to 838 is necessary but not sufficient for spindle localization; sequence RPREAKLVEF…DDLISKMEKI (245 aa). Residues 637–837 adopt a coiled-coil conformation; that stretch reads LQYSQKDLDA…CDDLISKMEK (201 aa).

This sequence belongs to the TACC family. As to quaternary structure, interacts with microtubules. Interacts with CKAP5 independently of clathrin. Interacts with CKAP5 and clathrin forming the TACC3/ch-TOG/clathrin complex located at spindle inter-microtubules bridges; TACC3 (phosphorylated at Ser-558 by AURKA) and CLTC are proposed to form a composite microtubule interaction surface. Interacts with CCDC100/CEP120. The coiled coil C-terminal region interacts with AH receptor nuclear translocator protein (ARNT) and ARNT2. Interacts with GCN5L2 and PCAF.

It is found in the cytoplasm. It localises to the cytoskeleton. The protein localises to the microtubule organizing center. Its subcellular location is the centrosome. The protein resides in the spindle. It is found in the spindle pole. Functionally, plays a role in the microtubule-dependent coupling of the nucleus and the centrosome. Involved in the processes that regulate centrosome-mediated interkinetic nuclear migration (INM) of neural progenitors. Acts as a component of the TACC3/ch-TOG/clathrin complex proposed to contribute to stabilization of kinetochore fibers of the mitotic spindle by acting as inter-microtubule bridge. The TACC3/ch-TOG/clathrin complex is required for the maintenance of kinetochore fiber tension. May be involved in the control of cell growth and differentiation. May contribute to cancer. This is Transforming acidic coiled-coil-containing protein 3 (TACC3) from Homo sapiens (Human).